The sequence spans 312 residues: Small ribosomal subunit biogenesis GTPase RsgA (312 aa).

A CP-type G domain is found at 86–245 (QSFLKRPAVA…LADTPGFNRP (160 aa)). GTP-binding positions include 135–138 (TKID) and 187–195 (GPSGVGKTS). Zn(2+)-binding residues include Cys-270, Cys-275, His-277, and Cys-283.

Belongs to the TRAFAC class YlqF/YawG GTPase family. RsgA subfamily. Monomer. Associates with 30S ribosomal subunit, binds 16S rRNA. It depends on Zn(2+) as a cofactor.

It localises to the cytoplasm. Its function is as follows. One of several proteins that assist in the late maturation steps of the functional core of the 30S ribosomal subunit. Helps release RbfA from mature subunits. May play a role in the assembly of ribosomal proteins into the subunit. Circularly permuted GTPase that catalyzes slow GTP hydrolysis, GTPase activity is stimulated by the 30S ribosomal subunit. This Prochlorococcus marinus (strain NATL1A) protein is Small ribosomal subunit biogenesis GTPase RsgA.